We begin with the raw amino-acid sequence, 112 residues long: Macrodomain Ori protein (112 aa).

The tract at residues 91–112 (FHTLSGGKPQVEGAEDYTEADD) is disordered. Over residues 103-112 (GAEDYTEADD) the composition is skewed to acidic residues.

It belongs to the MaoP family.

Functionally, involved in the organization of the Ori region of the chromosome into a macrodomain (MD). It constrains DNA mobility in the Ori macrodomain and limits long-distance DNA interactions with other chromosomal regions. This chain is Macrodomain Ori protein, found in Salmonella choleraesuis (strain SC-B67).